The primary structure comprises 462 residues: tRNA wybutosine-synthesizing protein 2 (462 aa).

Residues Ser-257, Lys-264, and 305-306 (EL) contribute to the S-adenosyl-L-methionine site.

This sequence belongs to the class I-like SAM-binding methyltransferase superfamily. TRM5/TYW2 family.

The protein resides in the cytoplasm. It carries out the reaction 4-demethylwyosine(37) in tRNA(Phe) + S-adenosyl-L-methionine = 4-demethyl-7-[(3S)-3-amino-3-carboxypropyl]wyosine(37) in tRNA(Phe) + S-methyl-5'-thioadenosine + H(+). Its pathway is tRNA modification; wybutosine-tRNA(Phe) biosynthesis. In terms of biological role, S-adenosyl-L-methionine-dependent transferase that acts as a component of the wybutosine biosynthesis pathway. Wybutosine is a hyper modified guanosine with a tricyclic base found at the 3'-position adjacent to the anticodon of eukaryotic phenylalanine tRNA. Catalyzes the transfer of the alpha-amino-alpha-carboxypropyl (acp) group from S-adenosyl-L-methionine to the C-7 position of 4-demethylwyosine (imG-14) to produce wybutosine-86. This chain is tRNA wybutosine-synthesizing protein 2 (TRM12), found in Saccharomyces cerevisiae (strain ATCC 204508 / S288c) (Baker's yeast).